Here is a 405-residue protein sequence, read N- to C-terminus: 4-hydroxy-3-methylbut-2-en-1-yl diphosphate synthase (flavodoxin) (405 aa).

Positions 297, 300, 343, and 350 each coordinate [4Fe-4S] cluster.

Belongs to the IspG family. [4Fe-4S] cluster is required as a cofactor.

The catalysed reaction is (2E)-4-hydroxy-3-methylbut-2-enyl diphosphate + oxidized [flavodoxin] + H2O + 2 H(+) = 2-C-methyl-D-erythritol 2,4-cyclic diphosphate + reduced [flavodoxin]. It functions in the pathway isoprenoid biosynthesis; isopentenyl diphosphate biosynthesis via DXP pathway; isopentenyl diphosphate from 1-deoxy-D-xylulose 5-phosphate: step 5/6. Its function is as follows. Converts 2C-methyl-D-erythritol 2,4-cyclodiphosphate (ME-2,4cPP) into 1-hydroxy-2-methyl-2-(E)-butenyl 4-diphosphate. The chain is 4-hydroxy-3-methylbut-2-en-1-yl diphosphate synthase (flavodoxin) from Francisella tularensis subsp. mediasiatica (strain FSC147).